We begin with the raw amino-acid sequence, 451 residues long: Phosphoglucosamine mutase (451 aa).

S101 (phosphoserine intermediate) is an active-site residue. S101, D240, D242, and D244 together coordinate Mg(2+). The residue at position 101 (S101) is a Phosphoserine.

It belongs to the phosphohexose mutase family. It depends on Mg(2+) as a cofactor. Post-translationally, activated by phosphorylation.

The enzyme catalyses alpha-D-glucosamine 1-phosphate = D-glucosamine 6-phosphate. Catalyzes the conversion of glucosamine-6-phosphate to glucosamine-1-phosphate. This is Phosphoglucosamine mutase from Nitrosococcus oceani (strain ATCC 19707 / BCRC 17464 / JCM 30415 / NCIMB 11848 / C-107).